Consider the following 319-residue polypeptide: MDFKDYYKILGVEPTADEKAIKAAYRKLARKYHPDVSKERDAEEKFKEANEAYEVLGDAQKRAEFDEIRKYGGQHGRPFQAPPGWESRGGGGGFEGGDFSDFFSSIFGGRSAGGNPFGGARQQQRSAGRRGQDVELELAVFLEETLSKESKQISFQVPQTNAMGQRTGFTTKTLNVRIPAGVTDGERIRLKGQGAPGSGGGANGDLFLTIRMAPHPLFDVEGHDLIITVPLAPWEAALGAKVAVPTLDGKINLTIRPDSQSGQRLRVPGKGLVNKQGARGNLYAQLKVVMPPASDESARELWTKLSEKAAFNPRTQWSK.

The J domain maps to 5–69; the sequence is DYYKILGVEP…QKRAEFDEIR (65 aa).

The protein localises to the cytoplasm. It localises to the nucleoid. In terms of biological role, DNA-binding protein that preferentially recognizes a curved DNA sequence. It is probably a functional analog of DnaJ; displays overlapping activities with DnaJ, but functions under different conditions, probably acting as a molecular chaperone in an adaptive response to environmental stresses other than heat shock. Lacks autonomous chaperone activity; binds native substrates and targets them for recognition by DnaK. Its activity is inhibited by the binding of CbpM. In Pseudomonas putida (strain ATCC 700007 / DSM 6899 / JCM 31910 / BCRC 17059 / LMG 24140 / F1), this protein is Curved DNA-binding protein.